Reading from the N-terminus, the 144-residue chain is Large ribosomal subunit protein uL15 (144 aa).

The segment at 1 to 52 (MKLHTLKSTPGARVEKHRVGRGHAAGKGKQAGKGQSGQNKRHGHRLGFEGGQ) is disordered. Residues 15-26 (EKHRVGRGHAAG) are compositionally biased toward basic residues.

Belongs to the universal ribosomal protein uL15 family. In terms of assembly, part of the 50S ribosomal subunit.

Functionally, binds to the 23S rRNA. The polypeptide is Large ribosomal subunit protein uL15 (Mycoplasmopsis agalactiae (strain NCTC 10123 / CIP 59.7 / PG2) (Mycoplasma agalactiae)).